Reading from the N-terminus, the 707-residue chain is Glucose starvation modulator protein 1 (707 aa).

The segment at residues 20-48 is a DNA-binding region (zn(2)-C6 fungal-type); the sequence is CTFCHQKHLQCSNERPCKNCVKRNIADQC. Disordered stretches follow at residues 63–122, 154–188, 260–283, and 385–404; these read NSKA…PNDL, QPTHTVASETSSSYSQVQPQHHPESSVPPSAPPES, DQQQSSSEATGTSASKAVPMGPSH, and NVSSRGNNNTSNQKLQSAIA. Low complexity-rich tracts occupy residues 66-79 and 91-104; these read AVAAATTPEATTTT and SPSISFPSSSISPI. 2 stretches are compositionally biased toward polar residues: residues 105–114 and 154–172; these read NTSTFDTNGH and QPTHTVASETSSSYSQVQP. Low complexity predominate over residues 178–188; that stretch reads SSVPPSAPPES. The span at 260–274 shows a compositional bias: polar residues; it reads DQQQSSSEATGTSAS. Residues 522–591 form the PAS domain; sequence DYEKLSQLNS…FQLFKSVAVG (70 aa). Residues 621–652 are compositionally biased toward low complexity; the sequence is NYNNNYNHNYSHNNNNNNNSNNSNNNGMSTGA. The tract at residues 621-659 is disordered; it reads NYNNNYNHNYSHNNNNNNNSNNSNNNGMSTGAGNSGDGD.

The protein belongs to the ERT1/acuK family.

The protein localises to the nucleus. Functionally, transcription factor which regulates nonfermentable carbon utilization. The protein is Glucose starvation modulator protein 1 (GSM1) of Lodderomyces elongisporus (strain ATCC 11503 / CBS 2605 / JCM 1781 / NBRC 1676 / NRRL YB-4239) (Yeast).